Reading from the N-terminus, the 470-residue chain is Macrophage metalloelastase (470 aa).

An N-terminal signal peptide occupies residues M1 to A16. A propeptide spans L17–G105 (activation peptide). Residue N20 is glycosylated (N-linked (GlcNAc...) asparagine). The Cysteine switch motif lies at P90–V97. Position 92 (C92) interacts with Zn(2+). 2 residues coordinate Ca(2+): D124 and D158. Zn(2+) is bound by residues H168 and D170. D175, G176, G178, and I180 together coordinate Ca(2+). A Zn(2+)-binding site is contributed by H183. G190, G192, and D194 together coordinate Ca(2+). Residue H196 participates in Zn(2+) binding. Ca(2+) contacts are provided by D198, E199, and E201. A Zn(2+)-binding site is contributed by H218. Residue E219 is part of the active site. Zn(2+) is bound by residues H222 and H228. Hemopexin repeat units follow at residues P279–L328, P329–N375, V377–I425, and G426–C470. C282 and C470 are joined by a disulfide. N285 carries an N-linked (GlcNAc...) asparagine glycan. Ca(2+)-binding residues include D289, E333, D381, and D430.

The protein belongs to the peptidase M10A family. It depends on Ca(2+) as a cofactor. Zn(2+) serves as cofactor. In terms of tissue distribution, found in alveolar macrophages but not in peripheral blood monocytes.

The protein localises to the secreted. The protein resides in the extracellular space. Its subcellular location is the extracellular matrix. The catalysed reaction is Hydrolysis of soluble and insoluble elastin. Specific cleavages are also produced at 14-Ala-|-Leu-15 and 16-Tyr-|-Leu-17 in the B chain of insulin.. Its function is as follows. May be involved in tissue injury and remodeling. Has significant elastolytic activity. Can accept large and small amino acids at the P1' site, but has a preference for leucine. Aromatic or hydrophobic residues are preferred at the P1 site, with small hydrophobic residues (preferably alanine) occupying P3. The sequence is that of Macrophage metalloelastase (MMP12) from Homo sapiens (Human).